We begin with the raw amino-acid sequence, 415 residues long: Lipoyl synthase, mitochondrial (415 aa).

The transit peptide at 1 to 33 (MAASTSHLRSLCSSTRSLSRSGVIVTPIACRGY) directs the protein to the mitochondrion. [4Fe-4S] cluster is bound by residues Cys-132, Cys-137, Cys-143, Cys-163, Cys-167, Cys-170, and Ser-378. A Radical SAM core domain is found at 148-367 (DKSSATATIM…RQRALEMGFL (220 aa)).

It belongs to the radical SAM superfamily. Lipoyl synthase family. [4Fe-4S] cluster serves as cofactor.

It localises to the mitochondrion. The enzyme catalyses [[Fe-S] cluster scaffold protein carrying a second [4Fe-4S](2+) cluster] + N(6)-octanoyl-L-lysyl-[protein] + 2 oxidized [2Fe-2S]-[ferredoxin] + 2 S-adenosyl-L-methionine + 4 H(+) = [[Fe-S] cluster scaffold protein] + N(6)-[(R)-dihydrolipoyl]-L-lysyl-[protein] + 4 Fe(3+) + 2 hydrogen sulfide + 2 5'-deoxyadenosine + 2 L-methionine + 2 reduced [2Fe-2S]-[ferredoxin]. The protein operates within protein modification; protein lipoylation via endogenous pathway; protein N(6)-(lipoyl)lysine from octanoyl-[acyl-carrier-protein]: step 2/2. Functionally, catalyzes the radical-mediated insertion of two sulfur atoms into the C-6 and C-8 positions of the octanoyl moiety bound to the lipoyl domains of lipoate-dependent enzymes, thereby converting the octanoylated domains into lipoylated derivatives. The sequence is that of Lipoyl synthase, mitochondrial from Aspergillus clavatus (strain ATCC 1007 / CBS 513.65 / DSM 816 / NCTC 3887 / NRRL 1 / QM 1276 / 107).